The chain runs to 468 residues: 3-isopropylmalate dehydratase large subunit (468 aa).

The disordered stretch occupies residues 53–74; that stretch reads QPSKTVATMDHNVPTDSRDLAG. Residues Cys-347, Cys-407, and Cys-410 each contribute to the [4Fe-4S] cluster site.

This sequence belongs to the aconitase/IPM isomerase family. LeuC type 1 subfamily. As to quaternary structure, heterodimer of LeuC and LeuD. The cofactor is [4Fe-4S] cluster.

It carries out the reaction (2R,3S)-3-isopropylmalate = (2S)-2-isopropylmalate. It participates in amino-acid biosynthesis; L-leucine biosynthesis; L-leucine from 3-methyl-2-oxobutanoate: step 2/4. Functionally, catalyzes the isomerization between 2-isopropylmalate and 3-isopropylmalate, via the formation of 2-isopropylmaleate. The polypeptide is 3-isopropylmalate dehydratase large subunit (Pasteurella multocida (strain Pm70)).